An 87-amino-acid chain; its full sequence is Large ribosomal subunit protein bL31B (87 aa).

It belongs to the bacterial ribosomal protein bL31 family. Type B subfamily. Part of the 50S ribosomal subunit.

The sequence is that of Large ribosomal subunit protein bL31B from Ralstonia nicotianae (strain ATCC BAA-1114 / GMI1000) (Ralstonia solanacearum).